The chain runs to 620 residues: 1-deoxy-D-xylulose-5-phosphate synthase (620 aa).

Thiamine diphosphate is bound by residues His-80 and 121 to 123 (GHS). Mg(2+) is bound at residue Asp-152. Residues 153 to 154 (GA), Asn-181, Tyr-288, and Glu-370 each bind thiamine diphosphate. Asn-181 is a binding site for Mg(2+).

Belongs to the transketolase family. DXPS subfamily. In terms of assembly, homodimer. The cofactor is Mg(2+). Thiamine diphosphate serves as cofactor.

The enzyme catalyses D-glyceraldehyde 3-phosphate + pyruvate + H(+) = 1-deoxy-D-xylulose 5-phosphate + CO2. It functions in the pathway metabolic intermediate biosynthesis; 1-deoxy-D-xylulose 5-phosphate biosynthesis; 1-deoxy-D-xylulose 5-phosphate from D-glyceraldehyde 3-phosphate and pyruvate: step 1/1. Its function is as follows. Catalyzes the acyloin condensation reaction between C atoms 2 and 3 of pyruvate and glyceraldehyde 3-phosphate to yield 1-deoxy-D-xylulose-5-phosphate (DXP). The polypeptide is 1-deoxy-D-xylulose-5-phosphate synthase (Escherichia coli O139:H28 (strain E24377A / ETEC)).